Reading from the N-terminus, the 155-residue chain is Small ribosomal subunit protein uS7 (155 aa).

It belongs to the universal ribosomal protein uS7 family. In terms of assembly, part of the 30S ribosomal subunit. Contacts proteins S9 and S11.

One of the primary rRNA binding proteins, it binds directly to 16S rRNA where it nucleates assembly of the head domain of the 30S subunit. Is located at the subunit interface close to the decoding center, probably blocks exit of the E-site tRNA. The polypeptide is Small ribosomal subunit protein uS7 (Xanthomonas campestris pv. campestris (strain 8004)).